The primary structure comprises 326 residues: Thiazole synthase (326 aa).

The active-site Schiff-base intermediate with DXP is the lysine 168. 1-deoxy-D-xylulose 5-phosphate is bound by residues glycine 229, 255–256, and 277–278; these read AG and NT.

This sequence belongs to the ThiG family. In terms of assembly, homotetramer. Forms heterodimers with either ThiH or ThiS.

Its subcellular location is the cytoplasm. It catalyses the reaction [ThiS sulfur-carrier protein]-C-terminal-Gly-aminoethanethioate + 2-iminoacetate + 1-deoxy-D-xylulose 5-phosphate = [ThiS sulfur-carrier protein]-C-terminal Gly-Gly + 2-[(2R,5Z)-2-carboxy-4-methylthiazol-5(2H)-ylidene]ethyl phosphate + 2 H2O + H(+). It functions in the pathway cofactor biosynthesis; thiamine diphosphate biosynthesis. Catalyzes the rearrangement of 1-deoxy-D-xylulose 5-phosphate (DXP) to produce the thiazole phosphate moiety of thiamine. Sulfur is provided by the thiocarboxylate moiety of the carrier protein ThiS. In vitro, sulfur can be provided by H(2)S. This chain is Thiazole synthase, found in Magnetococcus marinus (strain ATCC BAA-1437 / JCM 17883 / MC-1).